A 429-amino-acid polypeptide reads, in one-letter code: 26S proteasome regulatory subunit RPN7 (429 aa).

Ser-8 and Ser-77 each carry phosphoserine. A TPR repeat occupies 131–164 (AQAWINLGEYYAQIGDKDNAEKTLGKSLSKAIST). Residues 223–395 (NFKEAAKLLV…GIVETNRPDN (173 aa)) form the PCI domain.

In terms of assembly, the 26S proteasome is composed of a core protease, known as the 20S proteasome, capped at one or both ends by the 19S regulatory complex (RC). The RC is composed of at least 18 different subunits in two subcomplexes, the base and the lid, which form the portions proximal and distal to the 20S proteolytic core, respectively. Component of the lid subcomplex of the 19S RC.

It localises to the nucleus. In terms of biological role, component of the 19S cap proteasome complex which acts as a regulatory subunit of the 26S proteasome, involved in the ATP-dependent degradation of ubiquitinated proteins. The protein is 26S proteasome regulatory subunit RPN7 of Saccharomyces cerevisiae (strain ATCC 204508 / S288c) (Baker's yeast).